A 62-amino-acid polypeptide reads, in one-letter code: Large ribosomal subunit protein bL28 (62 aa).

The disordered stretch occupies residues 1 to 22 (MAKKCAISGKGPMSGNNVSHAK).

This sequence belongs to the bacterial ribosomal protein bL28 family.

The protein is Large ribosomal subunit protein bL28 of Sulfurimonas denitrificans (strain ATCC 33889 / DSM 1251) (Thiomicrospira denitrificans (strain ATCC 33889 / DSM 1251)).